Here is a 396-residue protein sequence, read N- to C-terminus: Ribosomal RNA large subunit methyltransferase I (396 aa).

One can recognise a PUA domain in the interval 2–81; the sequence is TVRLFLAKGR…EEINIEFFIR (80 aa).

Belongs to the methyltransferase superfamily. RlmI family.

It localises to the cytoplasm. It catalyses the reaction cytidine(1962) in 23S rRNA + S-adenosyl-L-methionine = 5-methylcytidine(1962) in 23S rRNA + S-adenosyl-L-homocysteine + H(+). Specifically methylates the cytosine at position 1962 (m5C1962) of 23S rRNA. In Serratia proteamaculans (strain 568), this protein is Ribosomal RNA large subunit methyltransferase I.